The sequence spans 332 residues: MKFLDQAKIYVRSGDGGNGVVAFRREKYIEFGGPDGGNGGRGGDIVFEAVENLNTLIDFRYTQHFRARKGGNGAGSDRTGAAAPPVVIKVPVGTQILDDDRETLLADLDAPGKRIVLLRGGDGGHGNAMFKTSTNRAPRRADPGWPGEERWVWLRLKLIADAGLVGLPNAGKSTFLSVASAARPKIADYPFTTLHPQLGVVRLSMTEEFVLADIPGLIEGAHDGAGLGDRFLGHVERCAALIHLIDGAAGDVVDAWRTIRGELEAYGGGLADKPELIVLNKMDAMTPHQIAGRRSALERASGCKVMVISAAAHQGVDAVLRETLRMIREQRQ.

One can recognise an Obg domain in the interval M1–I159. Residues A160–R328 enclose the OBG-type G domain. GTP-binding positions include G166–S173, F191–H195, D213–G216, N280–D283, and S309–A311. The Mg(2+) site is built by S173 and T193.

The protein belongs to the TRAFAC class OBG-HflX-like GTPase superfamily. OBG GTPase family. As to quaternary structure, monomer. The cofactor is Mg(2+).

It localises to the cytoplasm. Functionally, an essential GTPase which binds GTP, GDP and possibly (p)ppGpp with moderate affinity, with high nucleotide exchange rates and a fairly low GTP hydrolysis rate. Plays a role in control of the cell cycle, stress response, ribosome biogenesis and in those bacteria that undergo differentiation, in morphogenesis control. The chain is GTPase Obg from Acidiphilium cryptum (strain JF-5).